The chain runs to 451 residues: 3-carboxy-cis,cis-muconate cycloisomerase (451 aa).

Belongs to the class-II fumarase/aspartase family. As to quaternary structure, homotetramer.

It carries out the reaction 2-(carboxymethyl)-5-oxo-2,5-dihydro-2-furoate = 3-carboxy-cis,cis-muconate + H(+). The protein operates within aromatic compound metabolism; beta-ketoadipate pathway; 5-oxo-4,5-dihydro-2-furylacetate from 3-carboxy-cis,cis-muconate: step 1/2. In terms of biological role, catalyzes an anti cycloisomerization. In Acinetobacter baylyi (strain ATCC 33305 / BD413 / ADP1), this protein is 3-carboxy-cis,cis-muconate cycloisomerase (pcaB).